Reading from the N-terminus, the 634-residue chain is Chaperone protein HtpG (634 aa).

Residues methionine 1–arginine 342 form an a; substrate-binding region. The segment at glutamate 343–glutamine 559 is b. The interval isoleucine 560 to alanine 634 is c.

It belongs to the heat shock protein 90 family. As to quaternary structure, homodimer.

The protein localises to the cytoplasm. Its function is as follows. Molecular chaperone. Has ATPase activity. In Ectopseudomonas mendocina (strain ymp) (Pseudomonas mendocina), this protein is Chaperone protein HtpG.